A 522-amino-acid chain; its full sequence is Glycerol kinase (522 aa).

A substrate-binding site is contributed by threonine 15. Arginine 19 is an ATP binding site. Residues arginine 89 to glutamate 90, tyrosine 143, and aspartate 255 to glutamine 256 each bind substrate. ATP contacts are provided by residues threonine 276, glycine 321, and glycine 430 to asparagine 434.

Belongs to the FGGY kinase family. As to expression, highly expressed in germinating seeds and senescent leaves, and at lower levels in roots, leaves, flowers and siliques.

The protein localises to the cytoplasm. The protein resides in the cytosol. The enzyme catalyses glycerol + ATP = sn-glycerol 3-phosphate + ADP + H(+). The protein operates within polyol metabolism; glycerol degradation via glycerol kinase pathway; sn-glycerol 3-phosphate from glycerol: step 1/1. Key enzyme in the regulation of glycerol uptake and metabolism. Required for resistance to nonhost Pseudomonas bacteria and to the pathogenic fungus B.cinerea. The sequence is that of Glycerol kinase (GLPK) from Arabidopsis thaliana (Mouse-ear cress).